Consider the following 235-residue polypeptide: Phosphatidylserine decarboxylase proenzyme (235 aa).

The active-site Schiff-base intermediate with substrate; via pyruvic acid is Ser204. Residue Ser204 is modified to Pyruvic acid (Ser); by autocatalysis.

This sequence belongs to the phosphatidylserine decarboxylase family. PSD-A subfamily. In terms of assembly, heterodimer of a large membrane-associated beta subunit and a small pyruvoyl-containing alpha subunit. Pyruvate serves as cofactor. In terms of processing, is synthesized initially as an inactive proenzyme. Formation of the active enzyme involves a self-maturation process in which the active site pyruvoyl group is generated from an internal serine residue via an autocatalytic post-translational modification. Two non-identical subunits are generated from the proenzyme in this reaction, and the pyruvate is formed at the N-terminus of the alpha chain, which is derived from the carboxyl end of the proenzyme. The post-translation cleavage follows an unusual pathway, termed non-hydrolytic serinolysis, in which the side chain hydroxyl group of the serine supplies its oxygen atom to form the C-terminus of the beta chain, while the remainder of the serine residue undergoes an oxidative deamination to produce ammonia and the pyruvoyl prosthetic group on the alpha chain.

The protein resides in the cell membrane. The catalysed reaction is a 1,2-diacyl-sn-glycero-3-phospho-L-serine + H(+) = a 1,2-diacyl-sn-glycero-3-phosphoethanolamine + CO2. Its pathway is phospholipid metabolism; phosphatidylethanolamine biosynthesis; phosphatidylethanolamine from CDP-diacylglycerol: step 2/2. In terms of biological role, catalyzes the formation of phosphatidylethanolamine (PtdEtn) from phosphatidylserine (PtdSer). This is Phosphatidylserine decarboxylase proenzyme from Mycobacterium sp. (strain JLS).